Consider the following 256-residue polypeptide: MRNRWIWRFLRPECSGIRWISSPHGRLSPALRRGFLTTTTKSDYDRRPVEITPLEQRKLTFDTHALVQDLETHGFDKGQAQTIVSVLSTLSNVSLDTVYKEMVTKAQQEITIQQLMAHLDSIRKDMVILEKSEFANLRAENEKMKIELDQVKQQLINETSRIRADNRLDINLERSRVTDMFTDQEKQLMEATNEFTKKDMQTKSIISETSNKIDTEIASLKTLMESSKLETIRYLAASVFTCLAIALGFYRFWKEN.

The N-terminal 42 residues, 1-42 (MRNRWIWRFLRPECSGIRWISSPHGRLSPALRRGFLTTTTKS), are a transit peptide targeting the mitochondrion. Positions 106–164 (AQQEITIQQLMAHLDSIRKDMVILEKSEFANLRAENEKMKIELDQVKQQLINETSRIRA) form a coiled coil. A helical transmembrane segment spans residues 231–253 (TIRYLAASVFTCLAIALGFYRFW).

It belongs to the CCDC90 family. As to quaternary structure, interacts with MCU.

It localises to the mitochondrion membrane. This is Coiled-coil domain-containing protein 90B, mitochondrial (Ccdc90b) from Rattus norvegicus (Rat).